A 23-amino-acid polypeptide reads, in one-letter code: Clavanin-B (23 aa).

Phe23 carries the phenylalanine amide modification.

Its subcellular location is the secreted. Functionally, has antimicrobial activity. This Styela clava (Sea squirt) protein is Clavanin-B.